The primary structure comprises 368 residues: Phosphate acyltransferase (368 aa).

The interval 337–368 (LGEGEHNAGGAGHASPAAGHHAEPSAAQSSKA) is disordered. Positions 349–368 (HASPAAGHHAEPSAAQSSKA) are enriched in low complexity.

Belongs to the PlsX family. Homodimer. Probably interacts with PlsY.

The protein resides in the cytoplasm. The catalysed reaction is a fatty acyl-[ACP] + phosphate = an acyl phosphate + holo-[ACP]. It functions in the pathway lipid metabolism; phospholipid metabolism. Its function is as follows. Catalyzes the reversible formation of acyl-phosphate (acyl-PO(4)) from acyl-[acyl-carrier-protein] (acyl-ACP). This enzyme utilizes acyl-ACP as fatty acyl donor, but not acyl-CoA. In Burkholderia lata (strain ATCC 17760 / DSM 23089 / LMG 22485 / NCIMB 9086 / R18194 / 383), this protein is Phosphate acyltransferase.